A 123-amino-acid chain; its full sequence is Small ribosomal subunit protein uS12 (123 aa).

Residue Asp89 is modified to 3-methylthioaspartic acid.

This sequence belongs to the universal ribosomal protein uS12 family. Part of the 30S ribosomal subunit. Contacts proteins S8 and S17. May interact with IF1 in the 30S initiation complex.

In terms of biological role, with S4 and S5 plays an important role in translational accuracy. Functionally, interacts with and stabilizes bases of the 16S rRNA that are involved in tRNA selection in the A site and with the mRNA backbone. Located at the interface of the 30S and 50S subunits, it traverses the body of the 30S subunit contacting proteins on the other side and probably holding the rRNA structure together. The combined cluster of proteins S8, S12 and S17 appears to hold together the shoulder and platform of the 30S subunit. This is Small ribosomal subunit protein uS12 from Orientia tsutsugamushi (strain Ikeda) (Rickettsia tsutsugamushi).